A 146-amino-acid polypeptide reads, in one-letter code: UPF0260 protein Sden_1632 (146 aa).

It belongs to the UPF0260 family.

The protein is UPF0260 protein Sden_1632 of Shewanella denitrificans (strain OS217 / ATCC BAA-1090 / DSM 15013).